A 159-amino-acid polypeptide reads, in one-letter code: Transcription elongation factor A protein-like 1 (159 aa).

Residues Met-1 to Arg-120 are disordered. A compositionally biased stretch (basic and acidic residues) spans Lys-17–Pro-34. Acidic residues predominate over residues Gln-37–Leu-54. Composition is skewed to basic and acidic residues over residues Ser-64–Glu-80 and His-95–Gly-119.

Belongs to the TFS-II family. TFA subfamily.

Its subcellular location is the nucleus. In terms of biological role, may be involved in transcriptional regulation. Modulates various viral and cellular promoters in a promoter context-dependent manner. Does not bind DNA directly. The sequence is that of Transcription elongation factor A protein-like 1 from Bos taurus (Bovine).